Reading from the N-terminus, the 734-residue chain is Photosystem I P700 chlorophyll a apoprotein A2 (734 aa).

Transmembrane regions (helical) follow at residues 46 to 69, 135 to 158, 175 to 199, 273 to 291, 330 to 353, 369 to 395, 417 to 439, and 517 to 535; these read IFASHFGQLAIIFLWTSGNLFHVA, LYTGAIFLLFLSFISLLAGWLHLQ, LNHHLSGLFGVSSLAWAGHLVHVAI, VAHHHLAIAFLFLIGGLMY, IHFQLGLALASLGVITSLVAQHMY, AALYTHHQYIAGFIMTGAFAHGPIFFI, AIISHLSWASLFLGFHTLGLYVH, and FLVHHAIALGLHTTTLILV. The [4Fe-4S] cluster site is built by C559 and C568. A run of 2 helical transmembrane segments spans residues 575–596 and 643–665; these read DFYLAVFWMLNTIGWVTFYWHW and LSVWAWMFLFGHLVWATGFMFLI. H654, M662, and Y670 together coordinate chlorophyll a. W671 is a phylloquinone binding site. The chain crosses the membrane as a helical span at residues 707–727; the sequence is LVGLVHFSVGYIFTYAAFLIA.

It belongs to the PsaA/PsaB family. In terms of assembly, the PsaA/B heterodimer binds the P700 chlorophyll special pair and subsequent electron acceptors. PSI consists of a core antenna complex that captures photons, and an electron transfer chain that converts photonic excitation into a charge separation. The eukaryotic PSI reaction center is composed of at least 11 subunits. P700 is a chlorophyll a/chlorophyll a' dimer, A0 is one or more chlorophyll a, A1 is one or both phylloquinones and FX is a shared 4Fe-4S iron-sulfur center. is required as a cofactor.

It is found in the plastid. It localises to the chloroplast thylakoid membrane. It catalyses the reaction reduced [plastocyanin] + hnu + oxidized [2Fe-2S]-[ferredoxin] = oxidized [plastocyanin] + reduced [2Fe-2S]-[ferredoxin]. In terms of biological role, psaA and PsaB bind P700, the primary electron donor of photosystem I (PSI), as well as the electron acceptors A0, A1 and FX. PSI is a plastocyanin-ferredoxin oxidoreductase, converting photonic excitation into a charge separation, which transfers an electron from the donor P700 chlorophyll pair to the spectroscopically characterized acceptors A0, A1, FX, FA and FB in turn. Oxidized P700 is reduced on the lumenal side of the thylakoid membrane by plastocyanin. The chain is Photosystem I P700 chlorophyll a apoprotein A2 from Pisum sativum (Garden pea).